Here is a 375-residue protein sequence, read N- to C-terminus: Chaperone protein DnaJ (375 aa).

The J domain occupies 5-70 (GYYEVLGVSK…QKRQAYDQFG (66 aa)). The CR-type zinc-finger motif lies at 142 to 220 (GKEYKIEIPR…CKGEGLTEKR (79 aa)). Zn(2+) contacts are provided by Cys155, Cys158, Cys172, Cys175, Cys194, Cys197, Cys208, and Cys211. CXXCXGXG motif repeat units lie at residues 155–162 (CVDCTGSG), 172–179 (CPDCSGTG), 194–201 (CPRCKGKG), and 208–215 (CKTCKGEG).

It belongs to the DnaJ family. Homodimer. Requires Zn(2+) as cofactor.

Its subcellular location is the cytoplasm. Functionally, participates actively in the response to hyperosmotic and heat shock by preventing the aggregation of stress-denatured proteins and by disaggregating proteins, also in an autonomous, DnaK-independent fashion. Unfolded proteins bind initially to DnaJ; upon interaction with the DnaJ-bound protein, DnaK hydrolyzes its bound ATP, resulting in the formation of a stable complex. GrpE releases ADP from DnaK; ATP binding to DnaK triggers the release of the substrate protein, thus completing the reaction cycle. Several rounds of ATP-dependent interactions between DnaJ, DnaK and GrpE are required for fully efficient folding. Also involved, together with DnaK and GrpE, in the DNA replication of plasmids through activation of initiation proteins. The protein is Chaperone protein DnaJ of Leptospira biflexa serovar Patoc (strain Patoc 1 / Ames).